The following is a 356-amino-acid chain: UDP-N-acetylglucosamine--N-acetylmuramyl-(pentapeptide) pyrophosphoryl-undecaprenol N-acetylglucosamine transferase (356 aa).

Residues 10-12 (TAG), Asn123, Arg159, Ser193, Ile240, and Gln284 each bind UDP-N-acetyl-alpha-D-glucosamine.

It belongs to the glycosyltransferase 28 family. MurG subfamily.

The protein resides in the cell membrane. It carries out the reaction di-trans,octa-cis-undecaprenyl diphospho-N-acetyl-alpha-D-muramoyl-L-alanyl-D-glutamyl-meso-2,6-diaminopimeloyl-D-alanyl-D-alanine + UDP-N-acetyl-alpha-D-glucosamine = di-trans,octa-cis-undecaprenyl diphospho-[N-acetyl-alpha-D-glucosaminyl-(1-&gt;4)]-N-acetyl-alpha-D-muramoyl-L-alanyl-D-glutamyl-meso-2,6-diaminopimeloyl-D-alanyl-D-alanine + UDP + H(+). Its pathway is cell wall biogenesis; peptidoglycan biosynthesis. Its function is as follows. Cell wall formation. Catalyzes the transfer of a GlcNAc subunit on undecaprenyl-pyrophosphoryl-MurNAc-pentapeptide (lipid intermediate I) to form undecaprenyl-pyrophosphoryl-MurNAc-(pentapeptide)GlcNAc (lipid intermediate II). This is UDP-N-acetylglucosamine--N-acetylmuramyl-(pentapeptide) pyrophosphoryl-undecaprenol N-acetylglucosamine transferase from Corynebacterium glutamicum (strain ATCC 13032 / DSM 20300 / JCM 1318 / BCRC 11384 / CCUG 27702 / LMG 3730 / NBRC 12168 / NCIMB 10025 / NRRL B-2784 / 534).